Here is an 88-residue protein sequence, read N- to C-terminus: Small ribosomal subunit protein bS20 (88 aa).

Residues 1–27 (MANSKSAKKRALQSEKRRQHNASRRSM) form a disordered region.

This sequence belongs to the bacterial ribosomal protein bS20 family.

Binds directly to 16S ribosomal RNA. This is Small ribosomal subunit protein bS20 from Shewanella loihica (strain ATCC BAA-1088 / PV-4).